Here is a 344-residue protein sequence, read N- to C-terminus: DNA-directed RNA polymerase subunit alpha (344 aa).

Residues 1–232 are alpha N-terminal domain (alpha-NTD); the sequence is MGQYTINLRE…HLFLPPFGLE (232 aa). The alpha C-terminal domain (alpha-CTD) stretch occupies residues 270–344; that stretch reads LIKDQFLEYS…KRFGINLKLK (75 aa).

The protein belongs to the RNA polymerase alpha chain family. In plastids the minimal PEP RNA polymerase catalytic core is composed of four subunits: alpha, beta, beta', and beta''. When a (nuclear-encoded) sigma factor is associated with the core the holoenzyme is formed, which can initiate transcription.

Its subcellular location is the plastid. The protein localises to the chloroplast. It catalyses the reaction RNA(n) + a ribonucleoside 5'-triphosphate = RNA(n+1) + diphosphate. Its function is as follows. DNA-dependent RNA polymerase catalyzes the transcription of DNA into RNA using the four ribonucleoside triphosphates as substrates. This is DNA-directed RNA polymerase subunit alpha from Spirogyra maxima (Green alga).